The primary structure comprises 76 residues: Omega-conotoxin-like TxO3 (76 aa).

An N-terminal signal peptide occupies residues 1 to 22; that stretch reads MKLTCVVIVAVLFLTAWTFVTA. A propeptide spanning residues 23–52 is cleaved from the precursor; it reads VPHSSNALENLYLKAHHEMNNPEASELNKR. 3 disulfides stabilise this stretch: C53/C67, C60/C71, and C66/C75.

Belongs to the conotoxin O1 superfamily. In terms of tissue distribution, expressed by the venom duct.

The protein localises to the secreted. Omega-conotoxins act at presynaptic membranes, they bind and block voltage-gated calcium channels (Cav). The polypeptide is Omega-conotoxin-like TxO3 (TXO3) (Conus textile (Cloth-of-gold cone)).